The primary structure comprises 706 residues: Dihydroxyacetone synthase (706 aa).

Thiamine diphosphate contacts are provided by residues histidine 76 and 126–128 (GPL). Mg(2+) is bound by residues aspartate 167, asparagine 197, and valine 199. Residue asparagine 197 coordinates thiamine diphosphate. Positions 273, 431, and 459 each coordinate thiamine diphosphate. Glutamate 431 (proton donor) is an active-site residue. The short motif at 704–706 (NHL) is the Microbody targeting signal element.

It belongs to the transketolase family. Requires Mg(2+) as cofactor. The cofactor is Ca(2+). Mn(2+) is required as a cofactor. Co(2+) serves as cofactor. It depends on thiamine diphosphate as a cofactor.

The protein localises to the peroxisome. The catalysed reaction is D-xylulose 5-phosphate + formaldehyde = dihydroxyacetone + D-glyceraldehyde 3-phosphate. Functionally, involved in assimilation of formaldehyde. This chain is Dihydroxyacetone synthase (DAS1), found in Candida boidinii (Yeast).